A 360-amino-acid polypeptide reads, in one-letter code: Peptide chain release factor 1 (360 aa).

Position 235 is an N5-methylglutamine (Gln-235).

This sequence belongs to the prokaryotic/mitochondrial release factor family. Methylated by PrmC. Methylation increases the termination efficiency of RF1.

It localises to the cytoplasm. Functionally, peptide chain release factor 1 directs the termination of translation in response to the peptide chain termination codons UAG and UAA. This chain is Peptide chain release factor 1, found in Bordetella pertussis (strain Tohama I / ATCC BAA-589 / NCTC 13251).